Here is a 338-residue protein sequence, read N- to C-terminus: Phenylalanine--tRNA ligase alpha subunit (338 aa).

Residue E253 participates in Mg(2+) binding.

It belongs to the class-II aminoacyl-tRNA synthetase family. Phe-tRNA synthetase alpha subunit type 1 subfamily. As to quaternary structure, tetramer of two alpha and two beta subunits. The cofactor is Mg(2+).

Its subcellular location is the cytoplasm. The catalysed reaction is tRNA(Phe) + L-phenylalanine + ATP = L-phenylalanyl-tRNA(Phe) + AMP + diphosphate + H(+). The polypeptide is Phenylalanine--tRNA ligase alpha subunit (Legionella pneumophila (strain Paris)).